A 344-amino-acid polypeptide reads, in one-letter code: uncharacterized protein (344 aa).

Residues 95 to 344 (TINPEDANED…TPAKKNSKGR (250 aa)) are disordered. Residues 103–123 (EDAKVKNSLKLEKEEGSDEKS) show a composition bias toward basic and acidic residues. Over residues 135 to 155 (SDDESDNSNDSEESEAEDSDQ) the composition is skewed to acidic residues. The segment covering 191–200 (SAKNAKASKP) has biased composition (low complexity). Acidic residues predominate over residues 244–259 (SEDEDSGSDNSEEESE). Basic residues predominate over residues 265-276 (ASSKKPPSKSSK). Acidic residues predominate over residues 281–314 (EDEDEDSGQSESEHSEEESNSDEDSGQSEEESEE). Over residues 331 to 344 (TAKKTPAKKNSKGR) the composition is skewed to basic residues.

This is an uncharacterized protein from Acanthamoeba polyphaga (Amoeba).